We begin with the raw amino-acid sequence, 544 residues long: Peptide chain release factor 3 (544 aa).

A tr-type G domain is found at Glu17–Arg286. Residues Ser26–Thr33, Asp94–His98, and Asn148–Asp151 each bind GTP.

Belongs to the TRAFAC class translation factor GTPase superfamily. Classic translation factor GTPase family. PrfC subfamily.

The protein localises to the cytoplasm. Functionally, increases the formation of ribosomal termination complexes and stimulates activities of RF-1 and RF-2. It binds guanine nucleotides and has strong preference for UGA stop codons. It may interact directly with the ribosome. The stimulation of RF-1 and RF-2 is significantly reduced by GTP and GDP, but not by GMP. The polypeptide is Peptide chain release factor 3 (Microcystis aeruginosa (strain NIES-843 / IAM M-2473)).